Consider the following 173-residue polypeptide: 6,7-dimethyl-8-ribityllumazine synthase (173 aa).

5-amino-6-(D-ribitylamino)uracil contacts are provided by residues F24, 58–60, and 82–84; these read ALE and AVI. 87–88 contributes to the (2S)-2-hydroxy-3-oxobutyl phosphate binding site; the sequence is ET. H90 functions as the Proton donor in the catalytic mechanism. A 5-amino-6-(D-ribitylamino)uracil-binding site is contributed by N115. R129 contributes to the (2S)-2-hydroxy-3-oxobutyl phosphate binding site. A disordered region spans residues 150–173; it reads ALEPEEDDEDDEDEDFDDEEDDGR. A compositionally biased stretch (acidic residues) spans 152–173; sequence EPEEDDEDDEDEDFDDEEDDGR.

The protein belongs to the DMRL synthase family.

The enzyme catalyses (2S)-2-hydroxy-3-oxobutyl phosphate + 5-amino-6-(D-ribitylamino)uracil = 6,7-dimethyl-8-(1-D-ribityl)lumazine + phosphate + 2 H2O + H(+). The protein operates within cofactor biosynthesis; riboflavin biosynthesis; riboflavin from 2-hydroxy-3-oxobutyl phosphate and 5-amino-6-(D-ribitylamino)uracil: step 1/2. In terms of biological role, catalyzes the formation of 6,7-dimethyl-8-ribityllumazine by condensation of 5-amino-6-(D-ribitylamino)uracil with 3,4-dihydroxy-2-butanone 4-phosphate. This is the penultimate step in the biosynthesis of riboflavin. In Bordetella pertussis (strain Tohama I / ATCC BAA-589 / NCTC 13251), this protein is 6,7-dimethyl-8-ribityllumazine synthase.